The following is a 266-amino-acid chain: Protein phosphatase 1 regulatory subunit 35 (266 aa).

Polar residues predominate over residues 1-10; the sequence is MMVYNGSQLE. The disordered stretch occupies residues 1-118; sequence MMVYNGSQLE…QDLGTPVQQS (118 aa). Positions 21–38 are enriched in pro residues; that stretch reads PGPPPEPRAPEPGAPVPE. Residues Ser46 and Ser51 each carry the phosphoserine modification. Over residues 62–79 the composition is skewed to basic residues; that stretch reads GRRKGRADRRGGARKGRQ. Positions 86 to 97 are enriched in pro residues; the sequence is PPSPVRSGPPPA.

It belongs to the PPP1R35 family. In terms of assembly, interacts with PPP1CA; this interaction mediates the PPP1CA phosphatase activity inhibition. Interacts with RTTN; this interaction allows the mutual recruitment to the centriole.

The protein localises to the cytoplasm. Its subcellular location is the cytoskeleton. It localises to the microtubule organizing center. It is found in the centrosome. The protein resides in the centriole. In terms of biological role, during centriole duplication, plays a role in the centriole elongation by promoting the recruitment of the microtubule-binding elongation machinery through its interaction with RTTN, leading to the centriole to centrosome conversion. In addition may play a role in the primary cilia assembly. This Bos taurus (Bovine) protein is Protein phosphatase 1 regulatory subunit 35.